The sequence spans 350 residues: Putative deoxyribonuclease-2 (350 aa).

It belongs to the DNase II family.

The polypeptide is Putative deoxyribonuclease-2 (Burkholderia pseudomallei (strain 1710b)).